We begin with the raw amino-acid sequence, 684 residues long: Acetyl-coenzyme A synthetase 2 (684 aa).

CoA-binding positions include 207–210 (RGGK) and T326. ATP is bound by residues 402-404 (GEP), 426-431 (DTMWQT), D517, and R532. CoA is bound at residue S540. ATP is bound at residue R543. Residue R613 participates in CoA binding.

The protein belongs to the ATP-dependent AMP-binding enzyme family.

It carries out the reaction acetate + ATP + CoA = acetyl-CoA + AMP + diphosphate. This Kluyveromyces lactis (strain ATCC 8585 / CBS 2359 / DSM 70799 / NBRC 1267 / NRRL Y-1140 / WM37) (Yeast) protein is Acetyl-coenzyme A synthetase 2 (ACS2).